Consider the following 470-residue polypeptide: Nitric oxide synthase, inducible (470 aa).

L-arginine is bound by residues Trp2, Tyr3, and Glu7. Residues Arg11, Trp93, and Phe106 each contribute to the (6R)-L-erythro-5,6,7,8-tetrahydrobiopterin site. Tyr121 provides a ligand contact to heme b. The tract at residues 145-165 (FKAVARAALFSSTLMSRVLAN) is calmodulin-binding. One can recognise a Flavodoxin-like domain in the interval 169–307 (CTVLYATETG…AFSAWALTAL (139 aa)). Residues Thr175, Glu176, Thr177, Lys179, Ser180, Ser221, Thr222, Ser258, Cys265, Glu291, and Gln295 each coordinate FMN. Position 380 (Arg380) interacts with NADP(+). An FAD-binding site is contributed by His403. Thr440 contacts NADP(+).

This sequence belongs to the NOS family. Homodimer. Heme b serves as cofactor. It depends on FAD as a cofactor. Requires FMN as cofactor. (6R)-L-erythro-5,6,7,8-tetrahydrobiopterin is required as a cofactor.

It localises to the cytoplasm. The protein localises to the cytosol. It catalyses the reaction 2 L-arginine + 3 NADPH + 4 O2 + H(+) = 2 L-citrulline + 2 nitric oxide + 3 NADP(+) + 4 H2O. Its activity is regulated as follows. Not stimulated by calcium/calmodulin. Functionally, produces nitric oxide (NO) which is a messenger molecule with diverse functions throughout the body. In macrophages, NO mediates tumoricidal and bactericidal actions. Also has nitrosylase activity and mediates cysteine S-nitrosylation of cytoplasmic target proteins such COX2. The polypeptide is Nitric oxide synthase, inducible (nos2) (Oncorhynchus mykiss (Rainbow trout)).